The chain runs to 205 residues: Proteasome subunit beta type-3 (205 aa).

Belongs to the peptidase T1B family. In terms of assembly, the 26S proteasome consists of a 20S proteasome core and two 19S regulatory subunits. The 20S proteasome core is composed of 28 subunits that are arranged in four stacked rings, resulting in a barrel-shaped structure. The two end rings are each formed by seven alpha subunits, and the two central rings are each formed by seven beta subunits. The catalytic chamber with the active sites is on the inside of the barrel.

It localises to the cytoplasm. The protein resides in the nucleus. Its function is as follows. Non-catalytic component of the proteasome, a multicatalytic proteinase complex which is characterized by its ability to cleave peptides with Arg, Phe, Tyr, Leu, and Glu adjacent to the leaving group at neutral or slightly basic pH. The proteasome has an ATP-dependent proteolytic activity. This chain is Proteasome subunit beta type-3, found in Drosophila melanogaster (Fruit fly).